We begin with the raw amino-acid sequence, 507 residues long: Phytoene dehydrogenase (507 aa).

Val-12 to Gly-45 provides a ligand contact to FAD.

Belongs to the carotenoid/retinoid oxidoreductase family. The cofactor is FAD.

The protein operates within carotenoid biosynthesis; lycopene biosynthesis. Functionally, this enzyme converts phytoene into zeta-carotene via the intermediary of phytofluene by the symmetrical introduction of two double bonds at the C-11 and C-11' positions of phytoene. In Streptomyces griseus, this protein is Phytoene dehydrogenase (crtI).